Reading from the N-terminus, the 590-residue chain is Proline--tRNA ligase (590 aa).

Belongs to the class-II aminoacyl-tRNA synthetase family. ProS type 1 subfamily. Homodimer.

Its subcellular location is the cytoplasm. It catalyses the reaction tRNA(Pro) + L-proline + ATP = L-prolyl-tRNA(Pro) + AMP + diphosphate. Catalyzes the attachment of proline to tRNA(Pro) in a two-step reaction: proline is first activated by ATP to form Pro-AMP and then transferred to the acceptor end of tRNA(Pro). As ProRS can inadvertently accommodate and process non-cognate amino acids such as alanine and cysteine, to avoid such errors it has two additional distinct editing activities against alanine. One activity is designated as 'pretransfer' editing and involves the tRNA(Pro)-independent hydrolysis of activated Ala-AMP. The other activity is designated 'posttransfer' editing and involves deacylation of mischarged Ala-tRNA(Pro). The misacylated Cys-tRNA(Pro) is not edited by ProRS. This chain is Proline--tRNA ligase, found in Leifsonia xyli subsp. xyli (strain CTCB07).